The chain runs to 265 residues: L-histidine 2-aminobutanoyltransferase (265 aa).

It belongs to the methyltransferase superfamily. CntL family.

The enzyme catalyses L-histidine + S-adenosyl-L-methionine = (2S)-2-amino-4-{[(1S)-1-carboxy-2-(1H-imidazol-4-yl)ethyl]amino}butanoate + S-methyl-5'-thioadenosine + H(+). Its function is as follows. Catalyzes the nucleophilic attack of one alpha-aminobutanoate moiety from SAM onto L-histidine to produce the intermediate (2S)-2-amino-4-{[(1S)-1-carboxy-2-(1H-imidazol-4-yl)ethyl]amino}butanoate. Functions in the biosynthesis of the metallophore yersinopine, which is involved in metal acquisition and thus enables bacterial growth inside the host, where metal access is limited. Therefore, this enzyme probably contributes to Yersinia virulence. This chain is L-histidine 2-aminobutanoyltransferase, found in Yersinia pestis.